Consider the following 309-residue polypeptide: Homoserine O-succinyltransferase (309 aa).

C142 acts as the Acyl-thioester intermediate in catalysis. Substrate is bound by residues K163 and S192. The Proton acceptor role is filled by H235. E237 is a catalytic residue. R249 lines the substrate pocket.

Belongs to the MetA family.

It localises to the cytoplasm. The catalysed reaction is L-homoserine + succinyl-CoA = O-succinyl-L-homoserine + CoA. It participates in amino-acid biosynthesis; L-methionine biosynthesis via de novo pathway; O-succinyl-L-homoserine from L-homoserine: step 1/1. Functionally, transfers a succinyl group from succinyl-CoA to L-homoserine, forming succinyl-L-homoserine. This Erwinia tasmaniensis (strain DSM 17950 / CFBP 7177 / CIP 109463 / NCPPB 4357 / Et1/99) protein is Homoserine O-succinyltransferase.